Consider the following 734-residue polypeptide: Diacylglycerol kinase alpha (734 aa).

EF-hand domains lie at R109–M144 and E154–L189. Ca(2+)-binding residues include D122, D124, N126, E133, D167, D169, S171, S173, and E178. 2 Phorbol-ester/DAG-type zinc fingers span residues Q204–C252 and T268–C318. Positions N358–P505 are necessary and sufficient for the diacylglycerol kinase activity. A DAGKc domain is found at S371–P505. K483 carries the post-translational modification N6-acetyllysine.

The protein belongs to the eukaryotic diacylglycerol kinase family. As to quaternary structure, monomer.

The protein localises to the cytoplasm. Its subcellular location is the cytosol. The enzyme catalyses a 1,2-diacyl-sn-glycerol + ATP = a 1,2-diacyl-sn-glycero-3-phosphate + ADP + H(+). It catalyses the reaction a 1-O-alkyl-sn-glycerol + ATP = a 1-O-alkyl-sn-glycero-3-phosphate + ADP + H(+). It carries out the reaction 1-O-alkyl-2-acyl-sn-glycerol + ATP = 1-O-alkyl-2-acyl-sn-glycero-3-phosphate + ADP + H(+). The catalysed reaction is 1,2-dihexadecanoyl-sn-glycerol + ATP = 1,2-dihexadecanoyl-sn-glycero-3-phosphate + ADP + H(+). The enzyme catalyses 1-hexadecanoyl-2-(9Z-octadecenoyl)-sn-glycerol + ATP = 1-hexadecanoyl-2-(9Z-octadecenoyl)-sn-glycero-3-phosphate + ADP + H(+). It catalyses the reaction 2-(9Z-octadecenoyl)-glycerol + ATP = 2-(9Z-octadecenoyl)-sn-glycero-3-phosphate + ADP + H(+). It carries out the reaction 1,2-di-(9Z-octadecenoyl)-sn-glycerol + ATP = 1,2-di-(9Z-octadecenoyl)-sn-glycero-3-phosphate + ADP + H(+). The catalysed reaction is 1-octadecanoyl-2-(5Z,8Z,11Z,14Z-eicosatetraenoyl)-sn-glycerol + ATP = 1-octadecanoyl-2-(5Z,8Z,11Z,14Z-eicosatetraenoyl)-sn-glycero-3-phosphate + ADP + H(+). The enzyme catalyses 1,2-didecanoyl-sn-glycerol + ATP = 1,2-didecanoyl-sn-glycero-3-phosphate + ADP + H(+). It catalyses the reaction 1-O-hexadecyl-2-acetyl-sn-glycerol + ATP = 1-O-hexadecyl-2-acetyl-sn-glycero-3-phosphate + ADP + H(+). It carries out the reaction 1-O-hexadecyl-2-(5Z,8Z,11Z,14Z-eicosatetraenoyl)-sn-glycerol + ATP = 1-O-hexadecyl-2-(5Z,8Z,11Z,14Z-eicosatetraenoyl)-sn-glycero-3-phosphate + ADP + H(+). The catalysed reaction is 1-O-hexadecyl-2-(9Z-octadecenoyl)-sn-glycerol + ATP = 1-O-hexadecyl-2-(9Z-octadecenoyl)-sn-glycero-3-phosphate + ADP + H(+). The enzyme catalyses 1-O-hexadecyl-sn-glycerol + ATP = 1-O-hexadecyl-sn-glycero-3-phosphate + ADP + H(+). It participates in lipid metabolism; glycerolipid metabolism. Stimulated by calcium and phosphatidylserine. Its function is as follows. Diacylglycerol kinase that converts diacylglycerol/DAG into phosphatidic acid/phosphatidate/PA and regulates the respective levels of these two bioactive lipids. Thereby, acts as a central switch between the signaling pathways activated by these second messengers with different cellular targets and opposite effects in numerous biological processes. Also plays an important role in the biosynthesis of complex lipids. Can also phosphorylate 1-alkyl-2-acylglycerol in vitro as efficiently as diacylglycerol provided it contains an arachidonoyl group. Also involved in the production of alkyl-lysophosphatidic acid, another bioactive lipid, through the phosphorylation of 1-alkyl-2-acetyl glycerol. This Sus scrofa (Pig) protein is Diacylglycerol kinase alpha (DGKA).